The sequence spans 377 residues: Queuine tRNA-ribosyltransferase (377 aa).

Aspartate 93 acts as the Proton acceptor in catalysis. Residues 93-97 (DSGGF), aspartate 147, glutamine 191, and glycine 218 contribute to the substrate site. The tract at residues 249-255 (GVGTPLD) is RNA binding. Residue aspartate 268 is the Nucleophile of the active site. The interval 273 to 277 (TRNAR) is RNA binding; important for wobble base 34 recognition. Residues cysteine 306, cysteine 308, cysteine 311, and histidine 337 each contribute to the Zn(2+) site.

It belongs to the queuine tRNA-ribosyltransferase family. In terms of assembly, homodimer. Within each dimer, one monomer is responsible for RNA recognition and catalysis, while the other monomer binds to the replacement base PreQ1. It depends on Zn(2+) as a cofactor.

The enzyme catalyses 7-aminomethyl-7-carbaguanine + guanosine(34) in tRNA = 7-aminomethyl-7-carbaguanosine(34) in tRNA + guanine. The protein operates within tRNA modification; tRNA-queuosine biosynthesis. Functionally, catalyzes the base-exchange of a guanine (G) residue with the queuine precursor 7-aminomethyl-7-deazaguanine (PreQ1) at position 34 (anticodon wobble position) in tRNAs with GU(N) anticodons (tRNA-Asp, -Asn, -His and -Tyr). Catalysis occurs through a double-displacement mechanism. The nucleophile active site attacks the C1' of nucleotide 34 to detach the guanine base from the RNA, forming a covalent enzyme-RNA intermediate. The proton acceptor active site deprotonates the incoming PreQ1, allowing a nucleophilic attack on the C1' of the ribose to form the product. After dissociation, two additional enzymatic reactions on the tRNA convert PreQ1 to queuine (Q), resulting in the hypermodified nucleoside queuosine (7-(((4,5-cis-dihydroxy-2-cyclopenten-1-yl)amino)methyl)-7-deazaguanosine). This Oleidesulfovibrio alaskensis (strain ATCC BAA-1058 / DSM 17464 / G20) (Desulfovibrio alaskensis) protein is Queuine tRNA-ribosyltransferase.